A 264-amino-acid polypeptide reads, in one-letter code: 3-methyl-2-oxobutanoate hydroxymethyltransferase 2 (264 aa).

The Mg(2+) site is built by D44 and D83. 3-methyl-2-oxobutanoate is bound by residues 44–45 (DS), D83, and K111. E113 contributes to the Mg(2+) binding site. Residue E180 is the Proton acceptor of the active site.

Belongs to the PanB family. Homodecamer; pentamer of dimers. Mg(2+) is required as a cofactor.

The protein localises to the cytoplasm. It catalyses the reaction 3-methyl-2-oxobutanoate + (6R)-5,10-methylene-5,6,7,8-tetrahydrofolate + H2O = 2-dehydropantoate + (6S)-5,6,7,8-tetrahydrofolate. It participates in cofactor biosynthesis; (R)-pantothenate biosynthesis; (R)-pantoate from 3-methyl-2-oxobutanoate: step 1/2. In terms of biological role, catalyzes the reversible reaction in which hydroxymethyl group from 5,10-methylenetetrahydrofolate is transferred onto alpha-ketoisovalerate to form ketopantoate. This chain is 3-methyl-2-oxobutanoate hydroxymethyltransferase 2, found in Hahella chejuensis (strain KCTC 2396).